We begin with the raw amino-acid sequence, 35 residues long: Photosystem II reaction center protein T (35 aa).

Residues 3–23 form a helical membrane-spanning segment; that stretch reads ALVYTFLLVSTLGIIFFAIFF.

It belongs to the PsbT family. PSII is composed of 1 copy each of membrane proteins PsbA, PsbB, PsbC, PsbD, PsbE, PsbF, PsbH, PsbI, PsbJ, PsbK, PsbL, PsbM, PsbT, PsbY, PsbZ, Psb30/Ycf12, at least 3 peripheral proteins of the oxygen-evolving complex and a large number of cofactors. It forms dimeric complexes.

The protein localises to the plastid. It localises to the chloroplast thylakoid membrane. Functionally, found at the monomer-monomer interface of the photosystem II (PS II) dimer, plays a role in assembly and dimerization of PSII. PSII is a light-driven water plastoquinone oxidoreductase, using light energy to abstract electrons from H(2)O, generating a proton gradient subsequently used for ATP formation. This is Photosystem II reaction center protein T from Amborella trichopoda.